Reading from the N-terminus, the 332-residue chain is Glyceraldehyde-3-phosphate dehydrogenase 3 (332 aa).

NAD(+)-binding residues include Arg11, Ile12, and Asp33. Residues Lys46 and Lys63 each participate in a glycyl lysine isopeptide (Lys-Gly) (interchain with G-Cter in ubiquitin) cross-link. An NAD(+)-binding site is contributed by Thr120. Position 149 to 151 (149 to 151) interacts with D-glyceraldehyde 3-phosphate; that stretch reads SCT. The active-site Nucleophile is the Cys150. Cysteine persulfide is present on residues Cys150 and Cys154. Lys160 is covalently cross-linked (Glycyl lysine isopeptide (Lys-Gly) (interchain with G-Cter in URM1)). D-glyceraldehyde 3-phosphate is bound by residues Thr180, 209–210, and Arg232; that span reads TG. Ser302 is subject to Phosphoserine. Lys307 is covalently cross-linked (Glycyl lysine isopeptide (Lys-Gly) (interchain with G-Cter in URM1)). Residues Asn314 and Tyr318 each coordinate NAD(+).

Belongs to the glyceraldehyde-3-phosphate dehydrogenase family. In terms of assembly, homotetramer. Conjugated to URM1, a ubiquitin-like protein, in response to oxidative stresses. The attachment of URM1 to lysine residues exclusively depends on the presence of a peroxidatic cysteine in the target protein, with low specificity for the particular residue, motif, or structural context at which urmylation can occur. The URM1-conjugation reaction is mechanistically and directly coupled to the process of cysteine persulfidation, transfering the sulfur atom of the URM1 thiocarboxyl group to redox-active cysteine residues in the target protein if it is exposed to oxidative conditions. Post-translationally, persulfidated on specific redox-active cysteine residues. Persulfidation (also called protein S-sulfhydration) may provide a molecular mechanism that enables cells to protect vulnerable cysteine residues from reactive oxygen species (ROS) under stress conditions.

Its subcellular location is the cytoplasm. It is found in the mitochondrion. The enzyme catalyses D-glyceraldehyde 3-phosphate + phosphate + NAD(+) = (2R)-3-phospho-glyceroyl phosphate + NADH + H(+). It carries out the reaction NADH + H2O = (6R)-NADHX. It catalyses the reaction NADH + H2O = (6S)-NADHX. The catalysed reaction is NADPH + H2O = (6R)-NADPHX. The enzyme catalyses NADPH + H2O = (6S)-NADPHX. The protein operates within carbohydrate degradation; glycolysis; pyruvate from D-glyceraldehyde 3-phosphate: step 1/5. In terms of biological role, glyceraldehyde-3-phosphate dehydrogenase (GAPDH) involved in glycolysis and gluconeogenesis. Catalyzes the reaction of glyceraldehyde-3-phosphate to 1,3 bis-phosphoglycerate. The contribution of the TDH1, TDH2, and TDH3 to the total glyceraldehyde-3-phosphate dehydrogenase activity is 10-15, 25-30, and 50-60%, respectively. Its function is as follows. As a side activity, catalyzes the hydration of the nicotinamide ring of NADH or NADPH at the C6 position to give the corresponding hydrates, NADHX and NADPHX, which exist as R and S epimers, that cannot act as electron donors or acceptors and inhibit several dehydrogenases, making them toxic. The protein is Glyceraldehyde-3-phosphate dehydrogenase 3 of Saccharomyces cerevisiae (strain ATCC 204508 / S288c) (Baker's yeast).